A 394-amino-acid chain; its full sequence is MLPLTLSDLEGLPLGCSIVGSRCSRQQLQAHLEPWCQGDSSFDLLLLLAATRTAEREGISAAGATAASRRLTALADADLLLHGPGKPRRWPLPPLPAGVSPALLSHVALQRLPMQPLVAALGLEHEATFPHLRLESPQAGPARCLSTGRAMDPERVERLWRKGMRLGAQLRRPLLLAECVPGGTTTAQAVLKALGVPVNGLISGSARQPPQELKRHLVEQGLCRAQLPAWPSPQAVLAAVGDPFQAVAAGVLVSAQQPVLLGGGSQMAAVATLALASLPDQERKVLADRVLLGSTAWLALEWIRGGDMPALGCLLDEVGHRFGVSLAGLASGLRFHASRQPALRDYEDGFVKEGVGAGALLLLAQLQGQHSEALVEGCERALDQLLASAVASEV.

This sequence belongs to the UPF0284 family.

The sequence is that of UPF0284 protein SYNW1869 from Parasynechococcus marenigrum (strain WH8102).